The chain runs to 147 residues: Large ribosomal subunit protein bL9 (147 aa).

The protein belongs to the bacterial ribosomal protein bL9 family.

Binds to the 23S rRNA. The protein is Large ribosomal subunit protein bL9 of Bdellovibrio bacteriovorus (strain ATCC 15356 / DSM 50701 / NCIMB 9529 / HD100).